Here is a 216-residue protein sequence, read N- to C-terminus: Adenylate kinase (216 aa).

Residue 10–15 (GAGKGT) coordinates ATP. Residues 30-59 (STGDMLRAAVSAQTEVGKRAKAVMDAGKLV) are NMP. Residues Thr-31, Arg-36, 57-59 (KLV), 85-88 (GFPR), and Gln-92 contribute to the AMP site. The tract at residues 126 to 163 (GRYTCANCGTGYHDENLKPKVEGVCDKCGSTHFKRRPD) is LID. Position 127 (Arg-127) interacts with ATP. Zn(2+) contacts are provided by Cys-130, Cys-133, Cys-150, and Cys-153. The AMP site is built by Arg-160 and Arg-172. Ala-200 lines the ATP pocket.

The protein belongs to the adenylate kinase family. In terms of assembly, monomer.

The protein resides in the cytoplasm. It catalyses the reaction AMP + ATP = 2 ADP. The protein operates within purine metabolism; AMP biosynthesis via salvage pathway; AMP from ADP: step 1/1. In terms of biological role, catalyzes the reversible transfer of the terminal phosphate group between ATP and AMP. Plays an important role in cellular energy homeostasis and in adenine nucleotide metabolism. This Allorhizobium ampelinum (strain ATCC BAA-846 / DSM 112012 / S4) (Agrobacterium vitis (strain S4)) protein is Adenylate kinase.